The chain runs to 347 residues: DNA-directed RNA polymerase subunit alpha (347 aa).

An alpha N-terminal domain (alpha-NTD) region spans residues Met1 to Asp243. Positions Phe260–Ala347 are alpha C-terminal domain (alpha-CTD).

The protein belongs to the RNA polymerase alpha chain family. As to quaternary structure, homodimer. The RNAP catalytic core consists of 2 alpha, 1 beta, 1 beta' and 1 omega subunit. When a sigma factor is associated with the core the holoenzyme is formed, which can initiate transcription.

The catalysed reaction is RNA(n) + a ribonucleoside 5'-triphosphate = RNA(n+1) + diphosphate. In terms of biological role, DNA-dependent RNA polymerase catalyzes the transcription of DNA into RNA using the four ribonucleoside triphosphates as substrates. This Nitratidesulfovibrio vulgaris (strain ATCC 29579 / DSM 644 / CCUG 34227 / NCIMB 8303 / VKM B-1760 / Hildenborough) (Desulfovibrio vulgaris) protein is DNA-directed RNA polymerase subunit alpha.